A 279-amino-acid polypeptide reads, in one-letter code: Thermitase (279 aa).

Asp5 contacts Ca(2+). Positions 12–277 constitute a Peptidase S8 domain; that stretch reads QYGPQKIQAP…KGRVNAYKAV (266 aa). The Charge relay system role is filled by Asp38. Ca(2+) contacts are provided by Asp47, Asp57, Asp60, Asp62, Thr64, and Gln66. The Charge relay system role is filled by His71. Val82, Asn85, Thr87, and Ile89 together coordinate Ca(2+). Na(+) is bound by residues Ala173, Tyr175, and Ala178. Val199 and Asp201 together coordinate Ca(2+). Asp201 is a binding site for Na(+). The active-site Charge relay system is Ser225.

This sequence belongs to the peptidase S8 family. Ca(2+) serves as cofactor. It depends on Na(+) as a cofactor.

It localises to the secreted. It catalyses the reaction Hydrolysis of proteins, including collagen.. This chain is Thermitase, found in Thermoactinomyces vulgaris.